The chain runs to 554 residues: CTP synthase (554 aa).

Residues 1-265 (MTPLIFVTGG…DELVIEQFKL (265 aa)) are amidoligase domain. Residue S13 participates in CTP binding. S13 is a binding site for UTP. ATP contacts are provided by residues 14 to 19 (SLGKGI) and D71. Mg(2+)-binding residues include D71 and E139. Residues 146–148 (DIE), 186–191 (KTKPTQ), and K222 contribute to the CTP site. UTP-binding positions include 186 to 191 (KTKPTQ) and K222. The region spanning 292–545 (NIAVVGKYVD…VRAAREKKAG (254 aa)) is the Glutamine amidotransferase type-1 domain. G353 is a binding site for L-glutamine. C380 functions as the Nucleophile; for glutamine hydrolysis in the catalytic mechanism. L-glutamine contacts are provided by residues 381-384 (YGMQ), E404, and R471. Active-site residues include H518 and E520.

Belongs to the CTP synthase family. In terms of assembly, homotetramer.

It catalyses the reaction UTP + L-glutamine + ATP + H2O = CTP + L-glutamate + ADP + phosphate + 2 H(+). The catalysed reaction is L-glutamine + H2O = L-glutamate + NH4(+). The enzyme catalyses UTP + NH4(+) + ATP = CTP + ADP + phosphate + 2 H(+). It functions in the pathway pyrimidine metabolism; CTP biosynthesis via de novo pathway; CTP from UDP: step 2/2. With respect to regulation, allosterically activated by GTP, when glutamine is the substrate; GTP has no effect on the reaction when ammonia is the substrate. The allosteric effector GTP functions by stabilizing the protein conformation that binds the tetrahedral intermediate(s) formed during glutamine hydrolysis. Inhibited by the product CTP, via allosteric rather than competitive inhibition. Catalyzes the ATP-dependent amination of UTP to CTP with either L-glutamine or ammonia as the source of nitrogen. Regulates intracellular CTP levels through interactions with the four ribonucleotide triphosphates. This is CTP synthase from Xanthomonas euvesicatoria pv. vesicatoria (strain 85-10) (Xanthomonas campestris pv. vesicatoria).